Consider the following 349-residue polypeptide: DNA polymerase IV (349 aa).

A UmuC domain is found at 7 to 188 (IIHIDMDYFF…LPVKKLFGVG (182 aa)). Asp11 and Asp106 together coordinate Mg(2+). Glu107 is a catalytic residue.

Belongs to the DNA polymerase type-Y family. As to quaternary structure, monomer. Mg(2+) serves as cofactor.

The protein localises to the cytoplasm. The enzyme catalyses DNA(n) + a 2'-deoxyribonucleoside 5'-triphosphate = DNA(n+1) + diphosphate. Its function is as follows. Poorly processive, error-prone DNA polymerase involved in untargeted mutagenesis. Copies undamaged DNA at stalled replication forks, which arise in vivo from mismatched or misaligned primer ends. These misaligned primers can be extended by PolIV. Exhibits no 3'-5' exonuclease (proofreading) activity. May be involved in translesional synthesis, in conjunction with the beta clamp from PolIII. This chain is DNA polymerase IV, found in Francisella tularensis subsp. holarctica (strain OSU18).